The primary structure comprises 334 residues: Leukocyte cell-derived chemotaxin 1 (334 aa).

A helical membrane pass occupies residues 46–66 (VVLISGAVLLLFGAIGAFYFW). Residues 105–201 (GSGAEEAIEV…LCGDLPIFWL (97 aa)) enclose the BRICHOS domain. The cysteines at positions 132 and 193 are disulfide-linked. A propeptide spanning residues 211-214 (RERR) is cleaved from the precursor. Residues 212–270 (ERREVVRNSAPSTTRRPHSEPRGNAGPGRLSNGTRPNVQDDAEPFNPDNPYHQQEGESM) form a disordered region. N-linked (GlcNAc...) asparagine glycosylation occurs at Asn-243. 4 cysteine pairs are disulfide-bonded: Cys-282/Cys-286, Cys-283/Cys-323, Cys-293/Cys-317, and Cys-297/Cys-313.

It belongs to the chondromodulin-1 family. Post-translationally, after cleavage, the post-translationally modified ChM-I is secreted as a glycoprotein. Detected in the four cardiac valves, valvular interstitial cells and extracellular matrix (at protein level).

It is found in the secreted. The protein localises to the extracellular space. It localises to the extracellular matrix. Its subcellular location is the endomembrane system. Bifunctional growth regulator that stimulates the growth of cultured chondrocytes in the presence of basic fibroblast growth factor (FGF) but inhibits the growth of cultured vascular endothelial cells. May contribute to the rapid growth of cartilage and vascular invasion prior to the replacement of cartilage by bone during endochondral bone development. Inhibits in vitro tube formation and mobilization of endothelial cells. Plays a role as antiangiogenic factor in cardiac valves to suppress neovascularization. The polypeptide is Leukocyte cell-derived chemotaxin 1 (Mus musculus (Mouse)).